Reading from the N-terminus, the 274-residue chain is Diaminopimelate epimerase (274 aa).

Substrate is bound by residues N11, Q44, and N64. Catalysis depends on C73, which acts as the Proton donor. Residues 74 to 75 (GN), N157, N190, and 208 to 209 (ER) each bind substrate. The active-site Proton acceptor is the C217. 218-219 (GS) contributes to the substrate binding site.

The protein belongs to the diaminopimelate epimerase family. In terms of assembly, homodimer.

The protein localises to the cytoplasm. The enzyme catalyses (2S,6S)-2,6-diaminopimelate = meso-2,6-diaminopimelate. It participates in amino-acid biosynthesis; L-lysine biosynthesis via DAP pathway; DL-2,6-diaminopimelate from LL-2,6-diaminopimelate: step 1/1. Its function is as follows. Catalyzes the stereoinversion of LL-2,6-diaminopimelate (L,L-DAP) to meso-diaminopimelate (meso-DAP), a precursor of L-lysine and an essential component of the bacterial peptidoglycan. The sequence is that of Diaminopimelate epimerase from Actinobacillus pleuropneumoniae serotype 3 (strain JL03).